Reading from the N-terminus, the 318-residue chain is NAD(P)H-dependent D-xylose reductase (318 aa).

The Proton donor role is filled by Y48. H110 contacts substrate. Residues 165–166 (SN), 214–223 (SNFGPLSFLE), and 270–280 (KSTFPNTLAVN) contribute to the NAD(+) site.

Belongs to the aldo/keto reductase family.

It carries out the reaction xylitol + NAD(+) = D-xylose + NADH + H(+). The catalysed reaction is xylitol + NADP(+) = D-xylose + NADPH + H(+). The protein operates within carbohydrate metabolism; D-xylose degradation. Functionally, reduces D-xylose into xylitol. Has a preference for NADPH, but can also utilize NADH as cosubstrate. The protein is NAD(P)H-dependent D-xylose reductase (XYL1) of Pachysolen tannophilus (Yeast).